A 550-amino-acid chain; its full sequence is MENQSLTFVGDEEAKVRKSTKFHPSIWGDYFIQNSSLSHAEESTQRMIKRVEELKVQVKSMFKDTSDILQLMNLIDSIQMLGLDYHFENEIDKALRLINEVDDKSYGLYETSLRFRLLRQHGNHVSTDIFNKFKGDNGSFISSLNGDAKGLLSLYNASYLGTHGETILDEAKSFAKPQLISLLSELEQSLAAQVTLFLELPLHKRVKILLVRKYILIYQEGAMRNNVLLEFAKLNFNLLQSLYQEELKKISIWWYDLALAKSLSFTRDRIVECYYWVLTLYFDPQYSHSRLIYSKVISLVSIMDDIYDNYGTLEECRQLTEAIKRWKPQAIDSLPEYLKYFYLKLLKTFEEIGEELEHNEKYRMLYLQDQIKAIAVAYLEEAKWSIERHVPSLDEHLHYSLITSGCSLVPCASYVGMGEVATKEVFDWHSSFPKAVEACCAIGRILNDITSYEREQGRGDNASTVESYMKDHGTNEKDACKKLQEIVEKAWKDLNQESLNQKNISRLIIERLVNFSRSMEEIYMSNDMYTNSGTKMKGNITLVLVEAFPV.

Residues Asp-304, Asp-308, and Glu-455 each contribute to the Mg(2+) site. Residues 304–308 (DDIYD) carry the DDXXD motif motif.

It belongs to the terpene synthase family. Tpsa subfamily. Requires Mg(2+) as cofactor. Mn(2+) serves as cofactor. Co(2+) is required as a cofactor. It depends on Ni(2+) as a cofactor.

The protein localises to the cytoplasm. The enzyme catalyses (2E,6E)-farnesyl diphosphate = (+)-germacrene D + diphosphate. Its pathway is secondary metabolite biosynthesis; terpenoid biosynthesis. Functionally, involved in the biosynthesis of germacrene D. Can use farnesyl diphosphate as substrate, but not geranyl diphosphate. Produces mainly (+)-germacrene D along with germacrene B and a number of minor by-products. This chain is (+)-germacrene D synthase, found in Zingiber officinale (Ginger).